Here is a 555-residue protein sequence, read N- to C-terminus: Undecaprenyl phosphate-alpha-4-amino-4-deoxy-L-arabinose arabinosyl transferase (555 aa).

11 helical membrane passes run 6-26 (GSWAILLAIFFALVYLIPLNG), 87-107 (FGSVFSTGMTALLVFALAMLM), 116-136 (LATLIFLSMVLVFSIGTYSVL), 178-198 (FMTKGFLALAVPVIAVIPIVI), 206-226 (LLIYGPVAIVVAVLLSLPWAL), 257-277 (APFWYYVPVLMAAVLPWLALL), 293-313 (ELFFLLSWVMMPLIFFSIAKG), 315-335 (LPTYILPCMAPLALLMAAYAE), 351-371 (VLNGLFGLICILALVVLGSGL), 384-404 (PKIVIGIIAFAGWLLFAVVSV), and 411-431 (WSWAAACPLLLCLLIGYAIPQ).

It belongs to the glycosyltransferase 83 family.

The protein localises to the cell inner membrane. It carries out the reaction 4-amino-4-deoxy-alpha-L-arabinopyranosyl di-trans,octa-cis-undecaprenyl phosphate + lipid IVA = lipid IIA + di-trans,octa-cis-undecaprenyl phosphate.. It functions in the pathway lipopolysaccharide metabolism; 4-amino-4-deoxy-beta-L-arabinose-lipid A biosynthesis. In terms of biological role, catalyzes the transfer of the L-Ara4N moiety of the glycolipid undecaprenyl phosphate-alpha-L-Ara4N to lipid A. The modified arabinose is attached to lipid A and is required for resistance to polymyxin and cationic antimicrobial peptides. The sequence is that of Undecaprenyl phosphate-alpha-4-amino-4-deoxy-L-arabinose arabinosyl transferase from Serratia proteamaculans (strain 568).